The sequence spans 380 residues: Actinidain (380 aa).

The first 24 residues, 1 to 24 (MGLPKSFVSMSLLFFSTLLILSLA), serve as a signal peptide directing secretion. A propeptide spans 25-126 (FNAKNLTQRT…NQYEPRVGQV (102 aa)) (activation peptide). 3 disulfide bridges follow: Cys-148/Cys-191, Cys-182/Cys-224, and Cys-282/Cys-332. Residue Cys-151 is part of the active site. Residue Cys-151 coordinates E64. Catalysis depends on residues His-288 and Asn-308.

It belongs to the peptidase C1 family. As to expression, fruit.

The catalysed reaction is Specificity close to that of papain.. With respect to regulation, repressed by the active-site-directed cysteine protease inhibitor E64 (L-trans-epoxysuccinyl-leucylamide-(4-guanido)-butane) produced by Aspergillus japonicus. Its function is as follows. Cysteine protease responsible for the cleavage of kiwellin into kissper and KiTH. The sequence is that of Actinidain from Actinidia chinensis var. chinensis (Chinese soft-hair kiwi).